The primary structure comprises 1101 residues: Cytospin-A (1101 aa).

Disordered stretches follow at residues 1-170 (MRKA…NQIS) and 280-366 (SDCG…SGNA). Composition is skewed to polar residues over residues 29–48 (ESSA…LSKA) and 64–86 (ASNS…TAMS). Positions 93–110 (RSSAGSSSNTKRSGSSGA) are enriched in low complexity. Composition is skewed to basic and acidic residues over residues 114 to 125 (GSSRERLRERSR) and 151 to 165 (GRTD…KSKS). Positions 162–254 (KSKSDNQISD…LKDRLNALGF (93 aa)) form a coiled coil. The segment covering 333–355 (LTSSDDALDAPSSSSESEGLPST) has biased composition (low complexity). Coiled coils occupy residues 373-427 (CLTE…MDSL) and 492-785 (QHLS…RGRV). The tract at residues 923-978 (SISVSRRSSEELKRDISVPDGSSAPSLMVMTSPSPQLSLSSSSPTASVTPTARSRI) is disordered. The span at 929 to 939 (RSSEELKRDIS) shows a compositional bias: basic and acidic residues. The span at 953–975 (TSPSPQLSLSSSSPTASVTPTAR) shows a compositional bias: low complexity. Residues 995–1100 (GSKRNALLKW…YVTSIYKYFE (106 aa)) enclose the Calponin-homology (CH) domain.

It belongs to the cytospin-A family. May interact with both microtubules and actin cytoskeleton.

Its subcellular location is the cytoplasm. The protein localises to the cytoskeleton. It localises to the spindle. It is found in the cell junction. The protein resides in the gap junction. In terms of biological role, involved in cytokinesis and spindle organization. May play a role in actin cytoskeleton organization and microtubule stabilization and hence required for proper cell adhesion and migration. This is Cytospin-A (specc1l) from Xenopus tropicalis (Western clawed frog).